A 122-amino-acid chain; its full sequence is Large ribosomal subunit protein uL14 (122 aa).

This sequence belongs to the universal ribosomal protein uL14 family. Part of the 50S ribosomal subunit. Forms a cluster with proteins L3 and L19. In the 70S ribosome, L14 and L19 interact and together make contacts with the 16S rRNA in bridges B5 and B8.

Its function is as follows. Binds to 23S rRNA. Forms part of two intersubunit bridges in the 70S ribosome. The sequence is that of Large ribosomal subunit protein uL14 from Lactobacillus gasseri (strain ATCC 33323 / DSM 20243 / BCRC 14619 / CIP 102991 / JCM 1131 / KCTC 3163 / NCIMB 11718 / NCTC 13722 / AM63).